We begin with the raw amino-acid sequence, 1392 residues long: DNA-directed RNA polymerase subunit beta'' (1392 aa).

4 residues coordinate Zn(2+): Cys224, Cys295, Cys302, and Cys305.

It belongs to the RNA polymerase beta' chain family. RpoC2 subfamily. In terms of assembly, in plastids the minimal PEP RNA polymerase catalytic core is composed of four subunits: alpha, beta, beta', and beta''. When a (nuclear-encoded) sigma factor is associated with the core the holoenzyme is formed, which can initiate transcription. Zn(2+) serves as cofactor.

Its subcellular location is the plastid. The protein resides in the chloroplast. The enzyme catalyses RNA(n) + a ribonucleoside 5'-triphosphate = RNA(n+1) + diphosphate. Functionally, DNA-dependent RNA polymerase catalyzes the transcription of DNA into RNA using the four ribonucleoside triphosphates as substrates. This chain is DNA-directed RNA polymerase subunit beta'', found in Nicotiana tomentosiformis (Tobacco).